A 218-amino-acid chain; its full sequence is MKKRISTIANLVQSFNPKLVYDIGCDHSYLTSYLIKTNQNLTIVNSDISKNALLSNYQKFKNNNNIHFFVSDGFNNLPELNINPKIGVIAGLGGLKIINIISQKENFINRFVIQPQSNLIELRSFLSLNSWDIVNETLVQDREFIYPILVIEKLKKPFKLTKELVILGPKLINFKDKHCLMKHYQCLLRVYQPKQKPSLMDLKIIETLNKIITSYESS.

It belongs to the TrmK family.

The protein resides in the cytoplasm. This is Putative tRNA methyltransferase MG248 from Mycoplasma genitalium (strain ATCC 33530 / DSM 19775 / NCTC 10195 / G37) (Mycoplasmoides genitalium).